Consider the following 313-residue polypeptide: Glucosyl-dolichyl phosphate glucuronosyltransferase (313 aa).

Residues 284–304 form a helical membrane-spanning segment; it reads LIAIFVFTAAVGFGYVYGLLT.

The protein belongs to the glycosyltransferase 2 family.

It localises to the cell membrane. The enzyme catalyses an archaeal dolichyl alpha-D-glucosyl phosphate + UDP-alpha-D-glucuronate = an archaeal dolichyl beta-D-glucuronosyl-(1-&gt;4)-alpha-D-glucosyl phosphate + UDP + H(+). The protein operates within cell surface structure biogenesis; S-layer biogenesis. Involved in the protein N-glycosylation pathway responsible for the assembly and attachment of an N-linked pentasaccharide that decorates the S-layer glycoprotein and flagellins. Catalyzes the transfer of a glucuronate residue (GlcA) to a glucose residue already bound to a dolichol phosphate (DolP), a compound that serves as a glycan lipid carrier in Archaea. In vitro, is able to add GlcA to DolP-Glc in which the omega-position isoprene is not saturated. However, the likely physiological lipid substrate is alpha,omega-saturated. This Haloferax volcanii (strain ATCC 29605 / DSM 3757 / JCM 8879 / NBRC 14742 / NCIMB 2012 / VKM B-1768 / DS2) (Halobacterium volcanii) protein is Glucosyl-dolichyl phosphate glucuronosyltransferase.